We begin with the raw amino-acid sequence, 327 residues long: Prenyl transferase janC (327 aa).

The chain crosses the membrane as a helical span at residues 3–23; the sequence is FPGAGPILGAIAVSSCLYFLF. Lysine 63 and histidine 96 together coordinate isopentenyl diphosphate. Residues aspartate 103 and aspartate 107 each coordinate Mg(2+). Dimethylallyl diphosphate is bound by residues arginine 112 and lysine 196. Asparagine 211 is a glycosylation site (N-linked (GlcNAc...) asparagine).

The protein belongs to the FPP/GGPP synthase family.

It localises to the membrane. The protein operates within secondary metabolite biosynthesis. Functionally, prenyl transferase; part of the gene cluster that mediates the biosynthesis of the indole diterpenes janthitremanes such as shearinine K or shearinine A. The geranylgeranyl diphosphate (GGPP) synthase janG catalyzes the first step in janthitremane biosynthesis via conversion of farnesyl pyrophosphate and isopentyl pyrophosphate into geranylgeranyl pyrophosphate (GGPP). Condensation of indole-3-glycerol phosphate with GGPP by the prenyl transferase janC then forms 3-geranylgeranylindole (3-GGI). Epoxidation by the FAD-dependent monooxygenase janM leads to a epoxidized-GGI that is substrate of the terpene cyclase janB for cyclization to yield paspaline. Paspaline is subsequently converted to 13-desoxypaspaline by the cytochrome P450 monooxygenase janP, via beta-PC-M6 in a series of alpha-face oxidations. The cytochrome P450 monooxygenase janQ is proposed to carry out sequential beta-face oxidation steps at C-7 and C-13 of 13-desoxypaspaline to form paspalicine and paspalinine respectively. The indole diterpene prenyltransferase janD may then convert paspalinine into shearinine K which is substrate of janO and/or additional enzymes for oxidation and cyclization to generate shearinine A. This is Prenyl transferase janC from Penicillium janthinellum (Penicillium vitale).